An 812-amino-acid polypeptide reads, in one-letter code: Xaa-Pro dipeptidyl-peptidase (812 aa).

Catalysis depends on charge relay system residues S372, D492, and H523.

Belongs to the peptidase S15 family. In terms of assembly, homodimer.

It is found in the cytoplasm. The catalysed reaction is Hydrolyzes Xaa-Pro-|- bonds to release unblocked, N-terminal dipeptides from substrates including Ala-Pro-|-p-nitroanilide and (sequentially) Tyr-Pro-|-Phe-Pro-|-Gly-Pro-|-Ile.. Its function is as follows. Removes N-terminal dipeptides sequentially from polypeptides having unsubstituted N-termini provided that the penultimate residue is proline. The protein is Xaa-Pro dipeptidyl-peptidase of Pediococcus pentosaceus (strain ATCC 25745 / CCUG 21536 / LMG 10740 / 183-1w).